A 460-amino-acid polypeptide reads, in one-letter code: Cysteine--tRNA ligase (460 aa).

Cys-29 lines the Zn(2+) pocket. The 'HIGH' region motif lies at 31-41 (MTIYDLCHIGH). Zn(2+) contacts are provided by Cys-213, His-238, and Glu-242. A 'KMSKS' region motif is present at residues 270-274 (KMSKS). An ATP-binding site is contributed by Lys-273.

Belongs to the class-I aminoacyl-tRNA synthetase family. As to quaternary structure, monomer. The cofactor is Zn(2+).

Its subcellular location is the cytoplasm. It catalyses the reaction tRNA(Cys) + L-cysteine + ATP = L-cysteinyl-tRNA(Cys) + AMP + diphosphate. The polypeptide is Cysteine--tRNA ligase (Verminephrobacter eiseniae (strain EF01-2)).